Reading from the N-terminus, the 397-residue chain is MIVLVINSGSSSLKYQLFDMRKEALLAKGLVERIGLSGSMLTHRPIGKDQVVIETEILNHDRAIQLTVEALTHEDHGVVASMREIDAVGHRVAHGGDTFSDSAVVNEQSLANIRALFEVAPLHNPPAVMGIEACQHMLPGVPQVAVFDTAFHQTIPGYAYNYALPYELAAKHSLRRYGFHGTSHKYVAQWAAAMLGRPLEDLRIITCHLGNGASITAIDRGRSVDTSMGFTPLEGLIMGTRVGDMDPAAVPFLMEKEGLTTGQINDLMNKKSGVLGVSGVSSDFRDLEEEAAKGNERCQLALDMFAYRVKKYIGAYAAVMNGVDAIVFTAGLGENSPSMRQSVCSGLSYLGVQLDEEKNKGRGEADISAAGATCRVMVVPTNEELMIARDTYRLLKG.

N7 is a binding site for Mg(2+). K14 is an ATP binding site. R91 lines the substrate pocket. D148 functions as the Proton donor/acceptor in the catalytic mechanism. ATP contacts are provided by residues 208 to 212 (HLGNG), 283 to 285 (DFR), and 331 to 335 (GLGEN). E383 is a binding site for Mg(2+).

This sequence belongs to the acetokinase family. In terms of assembly, homodimer. The cofactor is Mg(2+). Mn(2+) serves as cofactor.

It is found in the cytoplasm. The catalysed reaction is acetate + ATP = acetyl phosphate + ADP. It functions in the pathway metabolic intermediate biosynthesis; acetyl-CoA biosynthesis; acetyl-CoA from acetate: step 1/2. In terms of biological role, catalyzes the formation of acetyl phosphate from acetate and ATP. Can also catalyze the reverse reaction. This chain is Acetate kinase, found in Heliobacterium modesticaldum (strain ATCC 51547 / Ice1).